Consider the following 124-residue polypeptide: UPF0299 membrane protein VIBHAR_02118 (124 aa).

The next 4 helical transmembrane spans lie at Leu6–Gly26, Val35–Leu55, Met72–Ala92, and Leu95–Phe115.

Belongs to the UPF0299 family.

The protein resides in the cell inner membrane. The chain is UPF0299 membrane protein VIBHAR_02118 from Vibrio campbellii (strain ATCC BAA-1116).